Consider the following 112-residue polypeptide: UPF0342 protein SP_1372 (112 aa).

Belongs to the UPF0342 family.

The sequence is that of UPF0342 protein SP_1372 from Streptococcus pneumoniae serotype 4 (strain ATCC BAA-334 / TIGR4).